Here is a 385-residue protein sequence, read N- to C-terminus: MKLVRKDIEKDNAGQVTLVPEEPEDMWHTYNLVQVGDSLRASTIRKVQTESSTGSVGSNRVRTTLTLCVEAIDFDSQACQLRVKGTNIQENEYVKMGAYHTIELEPNRQFTLAKKQWDSVVLERIEQACDPAWSADVAAVVMQEGLAHVCLVTPSMTLTRAKVEVNIPRKRKGNCSQHDRALERFYEQVVQAIQRHINFEVVKCILVASPGFVREQFCDYMFQQAVKTDNKVLLENRSKFLQVHASSGHKYSLKEVLCDPTVASRLSDTKAAGEVKALDDFYKMLQHEPDRAFYGLKQVERANEALAIDTLLISDELFRHQDVATRSRYVRLVDSVKENAGTVRIFSSLHVSGEQLGQLTGVAAILRFPVPELSDQEDDSSSEED.

K162 participates in a covalent cross-link: Glycyl lysine isopeptide (Lys-Gly) (interchain with G-Cter in SUMO2). Phosphoserine occurs at positions 374, 380, 381, and 382.

It belongs to the eukaryotic release factor 1 family. Pelota subfamily. As to quaternary structure, component of the Pelota-HBS1L complex, also named Dom34-Hbs1 complex, composed of PELO and HBS1L. Interacts with PINK1. Interacts with ABCE1. Interacts with CNOT4. A divalent metal cation serves as cofactor.

It is found in the cytoplasm. Functionally, component of the Pelota-HBS1L complex, a complex that recognizes stalled ribosomes and triggers the No-Go Decay (NGD) pathway. In the Pelota-HBS1L complex, PELO recognizes ribosomes stalled at the 3' end of an mRNA and engages stalled ribosomes by destabilizing mRNA in the mRNA channel. Following mRNA extraction from stalled ribosomes by the SKI complex, the Pelota-HBS1L complex promotes recruitment of ABCE1, which drives the disassembly of stalled ribosomes, followed by degradation of damaged mRNAs as part of the NGD pathway. As part of the PINK1-regulated signaling, upon mitochondrial damage is recruited to the ribosome/mRNA-ribonucleoprotein complex associated to mitochondrial outer membrane thereby enabling the recruitment of autophagy receptors and induction of mitophagy. In Rattus norvegicus (Rat), this protein is Protein pelota homolog (Pelo).